Reading from the N-terminus, the 94-residue chain is DNA-binding protein HU (94 aa).

It belongs to the bacterial histone-like protein family.

Its function is as follows. Histone-like DNA-binding protein which is capable of wrapping DNA to stabilize it, and thus to prevent its denaturation under extreme environmental conditions. This is DNA-binding protein HU (hup) from Xylella fastidiosa (strain 9a5c).